The sequence spans 100 residues: NADH-quinone oxidoreductase subunit K (100 aa).

Helical transmembrane passes span 2 to 22, 29 to 49, and 63 to 83; these read IGLS…LMGV, LMLF…FAAI, and FFII…LIVL.

The protein belongs to the complex I subunit 4L family. NDH-1 is composed of 14 different subunits. Subunits NuoA, H, J, K, L, M, N constitute the membrane sector of the complex.

Its subcellular location is the cell inner membrane. The enzyme catalyses a quinone + NADH + 5 H(+)(in) = a quinol + NAD(+) + 4 H(+)(out). Its function is as follows. NDH-1 shuttles electrons from NADH, via FMN and iron-sulfur (Fe-S) centers, to quinones in the respiratory chain. The immediate electron acceptor for the enzyme in this species is believed to be ubiquinone. Couples the redox reaction to proton translocation (for every two electrons transferred, four hydrogen ions are translocated across the cytoplasmic membrane), and thus conserves the redox energy in a proton gradient. The sequence is that of NADH-quinone oxidoreductase subunit K from Sulfurovum sp. (strain NBC37-1).